The primary structure comprises 198 residues: MSAFVTCGATVPFPALVEAVLAPEFVGCLSREGYRVLCVQFGRGYDFEAQFTSVTCTRMPLESAEVSELRQLVRDERVTVMGYKVQDVVVLGFAYSNNILQIIDRYGDVVISHAGTGSILDSLRLNKKLIVVVNHTLMDNHQKQIAEKFQNLGHILATNPTAIELCDAMKRLKHEDLIPLSSETNTEFMERLKSIAYS.

The protein belongs to the glycosyltransferase 28 family. In terms of assembly, heterodimer with ALG14 to form a functional enzyme.

It is found in the endoplasmic reticulum. It carries out the reaction an N-acetyl-alpha-D-glucosaminyl-diphospho-di-trans,poly-cis-dolichol + UDP-N-acetyl-alpha-D-glucosamine = an N,N'-diacetylchitobiosyl-diphospho-di-trans,poly-cis-dolichol + UDP + H(+). Involved in protein N-glycosylation. Essential for the second step of the dolichol-linked oligosaccharide pathway. In Candida glabrata (strain ATCC 2001 / BCRC 20586 / JCM 3761 / NBRC 0622 / NRRL Y-65 / CBS 138) (Yeast), this protein is UDP-N-acetylglucosamine transferase subunit ALG13 (ALG13).